The sequence spans 320 residues: 1,5-anhydro-D-fructose reductase (320 aa).

The active-site Proton donor is Tyr40. A substrate-binding site is contributed by His102. NADP(+) is bound by residues Gln194 and 265-277; that span reads IPGSITPSHIKEN.

The protein belongs to the aldo/keto reductase family. Monomer.

Its subcellular location is the cytoplasm. It carries out the reaction 1,5-anhydro-D-glucitol + NADP(+) = 1,5-anhydro-D-fructose + NADPH + H(+). Inhibited by p-chloromercuribenzoic acid and alkyliodines. Catalyzes the NADPH-dependent reduction of 1,5-anhydro-D-fructose (AF) to 1,5-anhydro-D-glucitol. This is 1,5-anhydro-D-fructose reductase (AKR1E2) from Macaca fascicularis (Crab-eating macaque).